Here is an 84-residue protein sequence, read N- to C-terminus: Cell division topological specificity factor (84 aa).

This sequence belongs to the MinE family.

Functionally, prevents the cell division inhibition by proteins MinC and MinD at internal division sites while permitting inhibition at polar sites. This ensures cell division at the proper site by restricting the formation of a division septum at the midpoint of the long axis of the cell. This chain is Cell division topological specificity factor, found in Pseudomonas fluorescens (strain ATCC BAA-477 / NRRL B-23932 / Pf-5).